Consider the following 617-residue polypeptide: tRNA uridine 5-carboxymethylaminomethyl modification enzyme MnmG (617 aa).

FAD-binding positions include 9–14 (GAGHAG), Val121, and Thr176. 269–283 (GPRYCPSIEDKFVRF) is an NAD(+) binding site. Gln366 is a binding site for FAD.

The protein belongs to the MnmG family. As to quaternary structure, homodimer. Heterotetramer of two MnmE and two MnmG subunits. Requires FAD as cofactor.

The protein resides in the cytoplasm. In terms of biological role, NAD-binding protein involved in the addition of a carboxymethylaminomethyl (cmnm) group at the wobble position (U34) of certain tRNAs, forming tRNA-cmnm(5)s(2)U34. The chain is tRNA uridine 5-carboxymethylaminomethyl modification enzyme MnmG from Acholeplasma laidlawii (strain PG-8A).